Consider the following 979-residue polypeptide: Protocadherin alpha-9 (979 aa).

The N-terminal stretch at 1 to 59 is a signal peptide; that stretch reads MRLGNRPEDIRTCVHLRWHIHGLLRQENASVVISKCLRHGAWRLLLWLLLLATWDVGSG. Topologically, residues 60–726 are extracellular; it reads QLHYSVPEEA…RREASLMDVN (667 aa). 6 consecutive Cadherin domains span residues 64 to 163, 164 to 272, 273 to 380, 381 to 485, 486 to 595, and 611 to 707; these read SVPE…PPIF, SVAE…APVF, DRSV…APEI, VLTS…APAF, AHPE…PPTL, and VSRS…VPKA. 2 N-linked (GlcNAc...) asparagine glycosylation sites follow: Asn-287 and Asn-295. A glycan (N-linked (GlcNAc...) asparagine) is linked at Asn-578. A helical membrane pass occupies residues 727–747; the sequence is VYLIIAICAVSSLLVLTLLLY. The Cytoplasmic portion of the chain corresponds to 748-979; sequence TALRCSAVPM…GNSTTDNSDQ (232 aa). PXXP repeat units lie at residues 763 to 766, 828 to 831, 861 to 864, 902 to 905, and 920 to 923; these read LGKP, PRQP, PGGP, PGNP, and PGSP. The tract at residues 763–923 is 5 X 4 AA repeats of P-X-X-P; sequence LGKPTLVCSS…PDKFIIPGSP (161 aa). Residues 859 to 979 are disordered; sequence AGPGGPDQQW…GNSTTDNSDQ (121 aa). A compositionally biased stretch (basic and acidic residues) spans 938–952; it reads DKSDFITFGKKEETK.

It is found in the cell membrane. Its function is as follows. Potential calcium-dependent cell-adhesion protein. May be involved in the establishment and maintenance of specific neuronal connections in the brain. In Mus musculus (Mouse), this protein is Protocadherin alpha-9.